The primary structure comprises 319 residues: Acetyl-coenzyme A carboxylase carboxyl transferase subunit alpha (319 aa).

In terms of domain architecture, CoA carboxyltransferase C-terminal spans 35 to 296 (NLDEEVQRLR…KAQLLADLSD (262 aa)).

This sequence belongs to the AccA family. As to quaternary structure, acetyl-CoA carboxylase is a heterohexamer composed of biotin carboxyl carrier protein (AccB), biotin carboxylase (AccC) and two subunits each of ACCase subunit alpha (AccA) and ACCase subunit beta (AccD).

The protein localises to the cytoplasm. The catalysed reaction is N(6)-carboxybiotinyl-L-lysyl-[protein] + acetyl-CoA = N(6)-biotinyl-L-lysyl-[protein] + malonyl-CoA. It functions in the pathway lipid metabolism; malonyl-CoA biosynthesis; malonyl-CoA from acetyl-CoA: step 1/1. In terms of biological role, component of the acetyl coenzyme A carboxylase (ACC) complex. First, biotin carboxylase catalyzes the carboxylation of biotin on its carrier protein (BCCP) and then the CO(2) group is transferred by the carboxyltransferase to acetyl-CoA to form malonyl-CoA. In Yersinia enterocolitica serotype O:8 / biotype 1B (strain NCTC 13174 / 8081), this protein is Acetyl-coenzyme A carboxylase carboxyl transferase subunit alpha.